Reading from the N-terminus, the 28-residue chain is Mu-theraphotoxin-Hsp1a (28 aa).

Disulfide bonds link C2/C16, C9/C21, and C15/C25. Position 28 is an asparagine amide (N28).

This sequence belongs to the neurotoxin 30 (phrixotoxin) family. Expressed by the venom gland.

Its subcellular location is the secreted. Functionally, potent and selective inhibitor of Nav1.7/SCN9A sodium channels. Inhibits Nav1.7/SCN9A peak current (IC(50)=13 nM). In vivo, does not induce visible signs of toxicity when intravenously injected into mice. This Homoeomma sp. (Peruvian tarantula) protein is Mu-theraphotoxin-Hsp1a.